The chain runs to 216 residues: Heart- and neural crest derivatives-expressed protein 2 (216 aa).

Positions methionine 74–asparagine 115 are disordered. Positions valine 82 to glycine 93 are enriched in gly residues. The span at proline 96–threonine 111 shows a compositional bias: basic residues. One can recognise a bHLH domain in the interval lysine 98–leucine 150.

Efficient DNA binding requires dimerization with another bHLH protein.

It localises to the nucleus. In terms of biological role, essential for cardiac morphogenesis. Binds DNA on E-box consensus sequence 5'-CANNTG-3'. Plays an important role in limb development, particularly in the establishment of anterior-posterior polarization of the limb bud. This is Heart- and neural crest derivatives-expressed protein 2 (HAND2) from Gallus gallus (Chicken).